The sequence spans 862 residues: Cytosolic carboxypeptidase 2 (862 aa).

One can recognise a Peptidase M14 domain in the interval 359 to 629 (YPYTYTDLQC…HVCDTLLDFC (271 aa)). Zn(2+)-binding residues include His-425, Glu-428, and His-521. Catalysis depends on Glu-593, which acts as the Proton donor/acceptor. Disordered stretches follow at residues 669–692 (SDIPLSDIESSTSGSDSSLSDGPP), 704–728 (NQKTVLKNPKKKRLQTRKQRNEQYQ), and 750–836 (STLQ…PNWS). Over residues 674-689 (SDIESSTSGSDSSLSD) the composition is skewed to low complexity. Over residues 711 to 721 (NPKKKRLQTRK) the composition is skewed to basic residues. A compositionally biased stretch (polar residues) spans 813-825 (ASCSPKRSTNSSL).

This sequence belongs to the peptidase M14 family. Interacts with RARRES1, KIF11 and MAPRE1. Zn(2+) is required as a cofactor. In terms of tissue distribution, widely expressed. Expressed in tissues with motile cilia such as testis, lung and trachea. Also detected in brain, eye, muscle, pancreas, intestine, stomach, pituitary, spleen, adrenal and kidney. Expressed in mitral and granular cells in brain.

The protein resides in the cytoplasm. The protein localises to the cytosol. Its subcellular location is the cytoskeleton. It is found in the microtubule organizing center. It localises to the centrosome. The protein resides in the centriole. The protein localises to the cilium basal body. The catalysed reaction is (L-glutamyl)(n+1)-gamma-L-glutamyl-L-glutamyl-[protein] + H2O = (L-glutamyl)(n)-gamma-L-glutamyl-L-glutamyl-[protein] + L-glutamate. With respect to regulation, inhibited by RARRES1. Metallocarboxypeptidase that mediates deglutamylation of tubulin and non-tubulin target proteins. Catalyzes the removal of polyglutamate side chains present on the gamma-carboxyl group of glutamate residues within the C-terminal tail of tubulin protein. Specifically cleaves tubulin long-side-chains, while it is not able to remove the branching point glutamate. Also catalyzes the removal of polyglutamate residues from the carboxy-terminus of non-tubulin proteins such as MYLK. The sequence is that of Cytosolic carboxypeptidase 2 from Mus musculus (Mouse).